The primary structure comprises 190 residues: Protein GrpE (190 aa).

A compositionally biased stretch (polar residues) spans 1-18 (MTETPNTSSEEIQTSEPS). The tract at residues 1 to 21 (MTETPNTSSEEIQTSEPSPDN) is disordered.

Belongs to the GrpE family. Homodimer.

It localises to the cytoplasm. In terms of biological role, participates actively in the response to hyperosmotic and heat shock by preventing the aggregation of stress-denatured proteins, in association with DnaK and GrpE. It is the nucleotide exchange factor for DnaK and may function as a thermosensor. Unfolded proteins bind initially to DnaJ; upon interaction with the DnaJ-bound protein, DnaK hydrolyzes its bound ATP, resulting in the formation of a stable complex. GrpE releases ADP from DnaK; ATP binding to DnaK triggers the release of the substrate protein, thus completing the reaction cycle. Several rounds of ATP-dependent interactions between DnaJ, DnaK and GrpE are required for fully efficient folding. This is Protein GrpE from Chlamydia trachomatis serovar A (strain ATCC VR-571B / DSM 19440 / HAR-13).